The chain runs to 358 residues: Cyanide hydratase (358 aa).

In terms of domain architecture, CN hydrolase spans 8–287 (YKAAAVNAEP…QGLLFVDIDL (280 aa)). Glutamate 48 functions as the Proton acceptor in the catalytic mechanism. Lysine 130 is a catalytic residue. Cysteine 165 (nucleophile) is an active-site residue.

Belongs to the carbon-nitrogen hydrolase superfamily. Nitrilase family. As to quaternary structure, oligomer of dimers, forming left-handed helical fibers.

It catalyses the reaction formamide = hydrogen cyanide + H2O. Catalyzes the hydration of cyanide to formamide. Degradation of cyanide may be important for plant pathogenic fungi in infection of cyanogenic plants. The protein is Cyanide hydratase of Penicillium rubens (strain ATCC 28089 / DSM 1075 / NRRL 1951 / Wisconsin 54-1255) (Penicillium chrysogenum).